The chain runs to 60 residues: Large ribosomal subunit protein uL30 (60 aa).

It belongs to the universal ribosomal protein uL30 family. As to quaternary structure, part of the 50S ribosomal subunit.

This is Large ribosomal subunit protein uL30 from Amoebophilus asiaticus (strain 5a2).